A 396-amino-acid polypeptide reads, in one-letter code: Probable 20S rRNA accumulation protein 4 (396 aa).

This sequence belongs to the TSR4 family.

The protein resides in the cytoplasm. It localises to the nucleus. The protein localises to the nucleolus. Required for processing of the 20S pre-rRNA at site D to generate mature 18S rRNA. In Schizosaccharomyces pombe (strain 972 / ATCC 24843) (Fission yeast), this protein is Probable 20S rRNA accumulation protein 4.